The following is an 804-amino-acid chain: Phenylalanine--tRNA ligase beta subunit (804 aa).

Residues 39 to 147 (GEGLDSVVTA…PDCEPGQPVF (109 aa)) enclose the tRNA-binding domain. A B5 domain is found at 401–480 (LAERKVTLAV…RLNGYDNIPV (80 aa)). The Mg(2+) site is built by Asp-458, Asp-464, Glu-467, and Glu-468. One can recognise an FDX-ACB domain in the interval 711-804 (SRFPQVARDS…LIAKLGAEIR (94 aa)).

Belongs to the phenylalanyl-tRNA synthetase beta subunit family. Type 1 subfamily. As to quaternary structure, tetramer of two alpha and two beta subunits. The cofactor is Mg(2+).

It is found in the cytoplasm. It carries out the reaction tRNA(Phe) + L-phenylalanine + ATP = L-phenylalanyl-tRNA(Phe) + AMP + diphosphate + H(+). This is Phenylalanine--tRNA ligase beta subunit from Syntrophotalea carbinolica (strain DSM 2380 / NBRC 103641 / GraBd1) (Pelobacter carbinolicus).